A 234-amino-acid polypeptide reads, in one-letter code: Probable glycerol uptake facilitator protein (234 aa).

2 consecutive transmembrane segments (helical) span residues 3 to 23 (VYLA…GVVA) and 36 to 56 (GWIV…YLVG). An NPA 1 motif is present at residues 64 to 66 (NPA). 3 helical membrane-spanning segments follow: residues 82–102 (VPGY…LVYL), 134–154 (LLTE…IGAN), and 164–184 (LVGF…GYAI). The short motif at 185-187 (NPA) is the NPA 2 element. The helical transmembrane segment at 214 to 234 (VPIIGPIIGGILGASLYNWLF) threads the bilayer.

This sequence belongs to the MIP/aquaporin (TC 1.A.8) family.

Its subcellular location is the cell membrane. The catalysed reaction is glycerol(in) = glycerol(out). Functionally, mediates glycerol diffusion across the cytoplasmic membrane via a pore-type mechanism. This chain is Probable glycerol uptake facilitator protein (glpF), found in Thermotoga maritima (strain ATCC 43589 / DSM 3109 / JCM 10099 / NBRC 100826 / MSB8).